Here is a 166-residue protein sequence, read N- to C-terminus: UBA-like domain-containing protein 2-A (166 aa).

The tract at residues Q120–R166 is disordered.

It belongs to the UBALD family.

In Xenopus laevis (African clawed frog), this protein is UBA-like domain-containing protein 2-A (ubald2-a).